A 287-amino-acid chain; its full sequence is Protease HtpX (287 aa).

A run of 2 helical transmembrane segments spans residues 4–24 (IFLL…VMSI) and 33–53 (SGLL…SLAI). Position 139 (histidine 139) interacts with Zn(2+). Residue glutamate 140 is part of the active site. Histidine 143 lines the Zn(2+) pocket. The next 2 membrane-spanning stretches (helical) occupy residues 154–174 (LIQG…AGII) and 195–215 (AVVF…VAYF). Residue glutamate 220 participates in Zn(2+) binding.

This sequence belongs to the peptidase M48B family. Zn(2+) serves as cofactor.

It localises to the cell inner membrane. The polypeptide is Protease HtpX (Shewanella piezotolerans (strain WP3 / JCM 13877)).